The primary structure comprises 484 residues: tRNA sulfurtransferase (484 aa).

Residues 63–167 enclose the THUMP domain; it reads QGIRERLSCM…DQRLFVVHDQ (105 aa). Residues 185–186, K267, G289, and Q298 contribute to the ATP site; that span reads LM. C346 and C457 are disulfide-bonded. The Rhodanese domain maps to 405 to 483; it reads ALAGQVILDI…GHANVRVYRP (79 aa). Residue C457 is the Cysteine persulfide intermediate of the active site.

This sequence belongs to the ThiI family.

Its subcellular location is the cytoplasm. It carries out the reaction [ThiI sulfur-carrier protein]-S-sulfanyl-L-cysteine + a uridine in tRNA + 2 reduced [2Fe-2S]-[ferredoxin] + ATP + H(+) = [ThiI sulfur-carrier protein]-L-cysteine + a 4-thiouridine in tRNA + 2 oxidized [2Fe-2S]-[ferredoxin] + AMP + diphosphate. The enzyme catalyses [ThiS sulfur-carrier protein]-C-terminal Gly-Gly-AMP + S-sulfanyl-L-cysteinyl-[cysteine desulfurase] + AH2 = [ThiS sulfur-carrier protein]-C-terminal-Gly-aminoethanethioate + L-cysteinyl-[cysteine desulfurase] + A + AMP + 2 H(+). Its pathway is cofactor biosynthesis; thiamine diphosphate biosynthesis. Catalyzes the ATP-dependent transfer of a sulfur to tRNA to produce 4-thiouridine in position 8 of tRNAs, which functions as a near-UV photosensor. Also catalyzes the transfer of sulfur to the sulfur carrier protein ThiS, forming ThiS-thiocarboxylate. This is a step in the synthesis of thiazole, in the thiamine biosynthesis pathway. The sulfur is donated as persulfide by IscS. This is tRNA sulfurtransferase from Pseudomonas syringae pv. syringae (strain B728a).